The primary structure comprises 788 residues: Protein translocase subunit SecA 2 (788 aa).

Residues Gln86, 104 to 108 (GEGKT), and Asp493 each bind ATP.

The protein belongs to the SecA family. As to quaternary structure, monomer and homodimer. Part of the essential Sec protein translocation apparatus which comprises SecA, SecYEG and auxiliary proteins SecDF. Other proteins may also be involved.

The protein resides in the cell membrane. Its subcellular location is the cytoplasm. The enzyme catalyses ATP + H2O + cellular proteinSide 1 = ADP + phosphate + cellular proteinSide 2.. Its function is as follows. Part of the Sec protein translocase complex. Interacts with the SecYEG preprotein conducting channel. Has a central role in coupling the hydrolysis of ATP to the transfer of proteins into and across the cell membrane, serving as an ATP-driven molecular motor driving the stepwise translocation of polypeptide chains across the membrane. In Bacillus anthracis, this protein is Protein translocase subunit SecA 2.